The primary structure comprises 904 residues: Phosphoenolpyruvate carboxylase (904 aa).

Catalysis depends on residues H151 and K570.

Belongs to the PEPCase type 1 family. The cofactor is Mg(2+).

It catalyses the reaction oxaloacetate + phosphate = phosphoenolpyruvate + hydrogencarbonate. Forms oxaloacetate, a four-carbon dicarboxylic acid source for the tricarboxylic acid cycle. The polypeptide is Phosphoenolpyruvate carboxylase (Xanthomonas campestris pv. campestris (strain ATCC 33913 / DSM 3586 / NCPPB 528 / LMG 568 / P 25)).